The sequence spans 407 residues: Proteasome-activating nucleotidase (407 aa).

A coiled-coil region spans residues 22-67; that stretch reads KEKTQIAELESKVLRLELKNKDINRENVQIKKENEILKRELDKLRI. ATP contacts are provided by residues 192-197 and H331; that span reads GTGKTL. Positions 405-407 are docks into pockets in the proteasome alpha-ring to cause gate opening; that stretch reads MYG.

The protein belongs to the AAA ATPase family. Homohexamer. The hexameric complex has a two-ring architecture resembling a top hat that caps the 20S proteasome core at one or both ends. Upon ATP-binding, the C-terminus of PAN interacts with the alpha-rings of the proteasome core by binding to the intersubunit pockets.

The protein resides in the cytoplasm. Its function is as follows. ATPase which is responsible for recognizing, binding, unfolding and translocation of substrate proteins into the archaeal 20S proteasome core particle. Is essential for opening the gate of the 20S proteasome via an interaction with its C-terminus, thereby allowing substrate entry and access to the site of proteolysis. Thus, the C-termini of the proteasomal ATPase function like a 'key in a lock' to induce gate opening and therefore regulate proteolysis. Unfolding activity requires energy from ATP hydrolysis, whereas ATP binding alone promotes ATPase-20S proteasome association which triggers gate opening, and supports translocation of unfolded substrates. The protein is Proteasome-activating nucleotidase of Methanococcus maripaludis (strain DSM 14266 / JCM 13030 / NBRC 101832 / S2 / LL).